Reading from the N-terminus, the 527-residue chain is V(D)J recombination-activating protein 2 (527 aa).

Residues 357–380 (EEQTTFTNSQTSTEDPGDSTPFED) form a disordered region. Over residues 358 to 370 (EQTTFTNSQTSTE) the composition is skewed to polar residues. Acidic residues predominate over residues 371-380 (DPGDSTPFED). A PHD-type; atypical zinc finger spans residues 416 to 484 (WITCCPTCDV…KYYCNEHVEI (69 aa)). Zn(2+) is bound by residues C419, C423, C446, H452, H455, C458, C478, and H481.

It belongs to the RAG2 family. In terms of assembly, component of the RAG complex composed of core components RAG1 and RAG2, and associated component HMGB1 or HMGB2. As to expression, cells of the B- and T-lymphocyte lineages.

Its subcellular location is the nucleus. Core component of the RAG complex, a multiprotein complex that mediates the DNA cleavage phase during V(D)J recombination. V(D)J recombination assembles a diverse repertoire of immunoglobulin and T-cell receptor genes in developing B and T-lymphocytes through rearrangement of different V (variable), in some cases D (diversity), and J (joining) gene segments. DNA cleavage by the RAG complex occurs in 2 steps: a first nick is introduced in the top strand immediately upstream of the heptamer, generating a 3'-hydroxyl group that can attack the phosphodiester bond on the opposite strand in a direct transesterification reaction, thereby creating 4 DNA ends: 2 hairpin coding ends and 2 blunt, 5'-phosphorylated ends. The chromatin structure plays an essential role in the V(D)J recombination reactions and the presence of histone H3 trimethylated at 'Lys-4' (H3K4me3) stimulates both the nicking and haipinning steps. The RAG complex also plays a role in pre-B cell allelic exclusion, a process leading to expression of a single immunoglobulin heavy chain allele to enforce clonality and monospecific recognition by the B-cell antigen receptor (BCR) expressed on individual B-lymphocytes. The introduction of DNA breaks by the RAG complex on one immunoglobulin allele induces ATM-dependent repositioning of the other allele to pericentromeric heterochromatin, preventing accessibility to the RAG complex and recombination of the second allele. In the RAG complex, RAG2 is not the catalytic component but is required for all known catalytic activities mediated by RAG1. It probably acts as a sensor of chromatin state that recruits the RAG complex to H3K4me3. This is V(D)J recombination-activating protein 2 (RAG2) from Homo sapiens (Human).